An 863-amino-acid polypeptide reads, in one-letter code: Receptor-like protein 9DC1 (863 aa).

The first 21 residues, 1-21 (MGCVKLVFFMLYVFLFQLVSS), serve as a signal peptide directing secretion. The Extracellular portion of the chain corresponds to 22–812 (SSLPHLCPED…EEDSPMISWQ (791 aa)). The segment at 24 to 90 (LPHLCPEDQA…GVHCDETTGQ (67 aa)) is N-cap. N-linked (GlcNAc...) asparagine glycosylation is found at asparagine 71 and asparagine 108. One copy of the LRR 1; degenerate repeat lies at 91 to 114 (VIALDLRCSQLQGKFHSNSSLFQL). LRR repeat units follow at residues 115–138 (SNLK…KFGE) and 140–163 (SDLT…ISHL). Residues 164 to 190 (SKLHVLLIGDQYGLSIVPHNFEPLLKN) form an LRR 4; degenerate repeat. N-linked (GlcNAc...) asparagine glycans are attached at residues asparagine 190, asparagine 203, and asparagine 211. LRR repeat units lie at residues 191 to 213 (LTQL…SNFS), 214 to 237 (SHLT…VFHL), 240 to 262 (LEFL…KWNS), 264 to 286 (ASLM…SFSH), 287 to 311 (LTSL…LWNL), and 312 to 336 (TNIE…IFEK). The N-linked (GlcNAc...) asparagine glycan is linked to asparagine 261. Residues asparagine 299 and asparagine 310 are each glycosylated (N-linked (GlcNAc...) asparagine). The LRR 11; degenerate repeat unit spans residues 337–357 (LKKLSLFRNDNLDGGLEFLSF). 15 LRR repeats span residues 358-382 (NTQL…ISGL), 383-406 (QNLE…IFSL), 408-428 (SLVE…EFKS), 429-452 (KTLS…LLNQ), 454-476 (NLQL…ICNL), 477-500 (KTLI…VVER), 502-524 (EYLS…TFSV), 525-549 (GNIL…MINC), 551-572 (YLTL…WLGY), 573-597 (LFQL…GNTN), 599-623 (FMGL…ILGN), 667-690 (LDSN…IIGD), 691-714 (LVGL…SFQN), 715-739 (LSVL…LASL), and 741-759 (FLEV…IPKG). N-linked (GlcNAc...) asparagine glycans are attached at residues asparagine 378, asparagine 396, and asparagine 416. Asparagine 464 carries an N-linked (GlcNAc...) asparagine glycan. Asparagine 519 is a glycosylation site (N-linked (GlcNAc...) asparagine). An N-linked (GlcNAc...) asparagine glycan is attached at asparagine 563. Residues asparagine 674, asparagine 698, and asparagine 714 are each glycosylated (N-linked (GlcNAc...) asparagine). Asparagine 746 and asparagine 767 each carry an N-linked (GlcNAc...) asparagine glycan. The tract at residues 760–812 (KQFDSFGNTSYQGNDGLRGFPLSKLCGGEDQVTTPAELDQEEEEEDSPMISWQ) is C-cap/acidic domain. The helical transmembrane segment at 813–833 (GVLVGYGCGLVIGLSVIYIMW) threads the bilayer. Residues 834 to 863 (STQYPAWFSRMDLKLEHIITTKMKKHKKRY) lie on the Cytoplasmic side of the membrane.

This sequence belongs to the RLP family.

The protein resides in the cell membrane. Its function is as follows. Involved in plant defense. Confers resistance to the fungal pathogen C.fulvum through recognition of the AVR9 elicitor protein. This chain is Receptor-like protein 9DC1, found in Solanum pimpinellifolium (Currant tomato).